Here is a 476-residue protein sequence, read N- to C-terminus: Ribulose bisphosphate carboxylase large chain (476 aa).

Positions 1-2 (MS) are excised as a propeptide. P3 is modified (N-acetylproline). K14 is subject to N6,N6,N6-trimethyllysine. Residues N123 and T173 each contribute to the substrate site. The active-site Proton acceptor is the K175. K177 lines the substrate pocket. Residues K201, D203, and E204 each contribute to the Mg(2+) site. Position 201 is an N6-carboxylysine (K201). The active-site Proton acceptor is the H294. R295, H327, and S379 together coordinate substrate.

It belongs to the RuBisCO large chain family. Type I subfamily. As to quaternary structure, heterohexadecamer of 8 large chains and 8 small chains; disulfide-linked. The disulfide link is formed within the large subunit homodimers. It depends on Mg(2+) as a cofactor. The disulfide bond which can form in the large chain dimeric partners within the hexadecamer appears to be associated with oxidative stress and protein turnover.

The protein localises to the plastid. The protein resides in the chloroplast. The enzyme catalyses 2 (2R)-3-phosphoglycerate + 2 H(+) = D-ribulose 1,5-bisphosphate + CO2 + H2O. It carries out the reaction D-ribulose 1,5-bisphosphate + O2 = 2-phosphoglycolate + (2R)-3-phosphoglycerate + 2 H(+). RuBisCO catalyzes two reactions: the carboxylation of D-ribulose 1,5-bisphosphate, the primary event in carbon dioxide fixation, as well as the oxidative fragmentation of the pentose substrate in the photorespiration process. Both reactions occur simultaneously and in competition at the same active site. This is Ribulose bisphosphate carboxylase large chain from Phaseolus vulgaris (Kidney bean).